We begin with the raw amino-acid sequence, 199 residues long: UPF0462 protein C4orf33 (199 aa).

This sequence belongs to the UPF0462 family.

This Homo sapiens (Human) protein is UPF0462 protein C4orf33 (C4orf33).